The sequence spans 155 residues: Endoribonuclease YbeY (155 aa).

Zn(2+)-binding residues include H120, H124, and H130.

This sequence belongs to the endoribonuclease YbeY family. The cofactor is Zn(2+).

The protein resides in the cytoplasm. Its function is as follows. Single strand-specific metallo-endoribonuclease involved in late-stage 70S ribosome quality control and in maturation of the 3' terminus of the 16S rRNA. This chain is Endoribonuclease YbeY, found in Staphylococcus aureus (strain bovine RF122 / ET3-1).